Consider the following 635-residue polypeptide: Threonine--tRNA ligase (635 aa).

A TGS domain is found at 1-61 (MTVVRLPDGT…ETDSDLVLIT (61 aa)). Residues 242-533 (DHRKLGKQLD…LIEHHAGALP (292 aa)) are catalytic. Zn(2+) is bound by residues Cys333, His384, and His510.

The protein belongs to the class-II aminoacyl-tRNA synthetase family. As to quaternary structure, homodimer. The cofactor is Zn(2+).

The protein resides in the cytoplasm. It carries out the reaction tRNA(Thr) + L-threonine + ATP = L-threonyl-tRNA(Thr) + AMP + diphosphate + H(+). In terms of biological role, catalyzes the attachment of threonine to tRNA(Thr) in a two-step reaction: L-threonine is first activated by ATP to form Thr-AMP and then transferred to the acceptor end of tRNA(Thr). Also edits incorrectly charged L-seryl-tRNA(Thr). The polypeptide is Threonine--tRNA ligase (Nitrosomonas europaea (strain ATCC 19718 / CIP 103999 / KCTC 2705 / NBRC 14298)).